Reading from the N-terminus, the 81-residue chain is uncharacterized protein (81 aa).

To yeast YDL157C.

It localises to the mitochondrion. This is an uncharacterized protein from Schizosaccharomyces pombe (strain 972 / ATCC 24843) (Fission yeast).